The chain runs to 487 residues: N-succinylglutamate 5-semialdehyde dehydrogenase (487 aa).

Residue glycine 221–glycine 226 coordinates NAD(+). Active-site residues include glutamate 244 and cysteine 278.

It belongs to the aldehyde dehydrogenase family. AstD subfamily.

The enzyme catalyses N-succinyl-L-glutamate 5-semialdehyde + NAD(+) + H2O = N-succinyl-L-glutamate + NADH + 2 H(+). It participates in amino-acid degradation; L-arginine degradation via AST pathway; L-glutamate and succinate from L-arginine: step 4/5. Catalyzes the NAD-dependent reduction of succinylglutamate semialdehyde into succinylglutamate. In Burkholderia cenocepacia (strain ATCC BAA-245 / DSM 16553 / LMG 16656 / NCTC 13227 / J2315 / CF5610) (Burkholderia cepacia (strain J2315)), this protein is N-succinylglutamate 5-semialdehyde dehydrogenase.